The chain runs to 353 residues: MSAGKGLLLVICLLFLPLKSAMALNCYFGTSGGAVEKSEAIQPFAVPGNAKPGDKIWESDDIKIPVYCDNNTNGNFESEHVYAWVNPYPGVQDRYYQLGVTYNGVDYDASLGKSRIDTNQCIDSKNIDIYTPEQIIAMGWQNKICSGDPANIHMSRTFLARMRLYVKIREMPPHDYQSTLSDYIVVQFDGAGSVNEDPTAQNLKYHITGLENIRVLDCSVNFSISPETQVIDFGKFNLLDIRRHTMSKTFSIKTTKSQNDQCTDGFKVSSSFYTEETLVEEDKALLIGNGLKLRLLDENASPYTFNKYAEYADFTSDMLVYEKTYTAELSSIPGTPIEAGPFDTVVLFKINYN.

The N-terminal stretch at 1–23 (MSAGKGLLLVICLLFLPLKSAMA) is a signal peptide.

It to E.coli YqiI.

May be involved in a fimbrial system chaperoned by YbgP and exported by YbgQ. This is an uncharacterized protein from Escherichia coli (strain K12).